The following is a 274-amino-acid chain: NH(3)-dependent NAD(+) synthetase (274 aa).

46 to 53 (GISGGQDS) is an ATP binding site. Residue Asp-52 participates in Mg(2+) binding. Arg-140 contacts deamido-NAD(+). ATP is bound at residue Thr-160. Glu-165 lines the Mg(2+) pocket. Deamido-NAD(+) contacts are provided by Lys-173 and Asp-180. The ATP site is built by Lys-189 and Thr-211. 260–261 (HK) is a deamido-NAD(+) binding site.

It belongs to the NAD synthetase family. Homodimer.

It carries out the reaction deamido-NAD(+) + NH4(+) + ATP = AMP + diphosphate + NAD(+) + H(+). Its pathway is cofactor biosynthesis; NAD(+) biosynthesis; NAD(+) from deamido-NAD(+) (ammonia route): step 1/1. Catalyzes the ATP-dependent amidation of deamido-NAD to form NAD. Uses ammonia as a nitrogen source. The chain is NH(3)-dependent NAD(+) synthetase from Streptococcus equi subsp. zooepidemicus (strain MGCS10565).